We begin with the raw amino-acid sequence, 524 residues long: Anthranilate synthase component 1 (524 aa).

Positions 1 to 16 (MQTTANHSSRSTQTGT) are enriched in polar residues. Residues 1 to 25 (MQTTANHSSRSTQTGTRAHGAALAE) form a disordered region. Residues S74 and 298-300 (PYM) contribute to the L-tryptophan site. 339–340 (GT) provides a ligand contact to chorismate. An Isoglutamyl lysine isopeptide (Lys-Gln) (interchain with Q-Cter in protein Pup) cross-link involves residue K355. E366 contacts Mg(2+). Chorismate is bound by residues Y454, R474, 488-490 (GGG), and G490. E503 is a Mg(2+) binding site.

This sequence belongs to the anthranilate synthase component I family. Heterotetramer consisting of two non-identical subunits: a beta subunit (TrpG) and a large alpha subunit (TrpE). It depends on Mg(2+) as a cofactor.

It carries out the reaction chorismate + L-glutamine = anthranilate + pyruvate + L-glutamate + H(+). It participates in amino-acid biosynthesis; L-tryptophan biosynthesis; L-tryptophan from chorismate: step 1/5. Feedback inhibited by tryptophan. Functionally, part of a heterotetrameric complex that catalyzes the two-step biosynthesis of anthranilate, an intermediate in the biosynthesis of L-tryptophan. In the first step, the glutamine-binding beta subunit (TrpG) of anthranilate synthase (AS) provides the glutamine amidotransferase activity which generates ammonia as a substrate that, along with chorismate, is used in the second step, catalyzed by the large alpha subunit of AS (TrpE) to produce anthranilate. In the absence of TrpG, TrpE can synthesize anthranilate directly from chorismate and high concentrations of ammonia. This Mycolicibacterium smegmatis (strain ATCC 700084 / mc(2)155) (Mycobacterium smegmatis) protein is Anthranilate synthase component 1 (trpE).